The chain runs to 294 residues: Large ribosomal subunit protein uL2c (294 aa).

Residues 224 to 249 are disordered; that stretch reads VMNPVDHPHGGGGEGKSPIGRSRPVT.

It belongs to the universal ribosomal protein uL2 family. Part of the 50S ribosomal subunit.

It is found in the plastid. The protein resides in the chloroplast. This Porphyra purpurea (Red seaweed) protein is Large ribosomal subunit protein uL2c (rpl2).